A 206-amino-acid chain; its full sequence is MNRAEEPYTVKEALLFSQRMAQLSKALWKSIEKDWQQWIKPYDLNINEHHILWIAYQLNGASISEIAKFGVMHVSTAFNFSKKLEERGYLEFSKKLNDKRNTYIQLTPKGEEVFLKILESYDPTRNAVLKGAQPLHQLYGKFPEIVEMMSIIRHIYGDDFMEIFEKSFSNIENEFTSEEGKMKKKQEAKEAGESIEVDKPLEPLKN.

Positions 13–157 constitute an HTH marR-type domain; sequence ALLFSQRMAQ…MMSIIRHIYG (145 aa). Residues 63–86 constitute a DNA-binding region (H-T-H motif); the sequence is ISEIAKFGVMHVSTAFNFSKKLEE. The tract at residues 177-206 is disordered; the sequence is SEEGKMKKKQEAKEAGESIEVDKPLEPLKN. The segment covering 178–206 has biased composition (basic and acidic residues); it reads EEGKMKKKQEAKEAGESIEVDKPLEPLKN.

In terms of assembly, homodimer.

Functionally, negative regulator of protease production and sporulation. In Bacillus licheniformis (strain ATCC 14580 / DSM 13 / JCM 2505 / CCUG 7422 / NBRC 12200 / NCIMB 9375 / NCTC 10341 / NRRL NRS-1264 / Gibson 46), this protein is HTH-type transcriptional regulator Hpr.